Consider the following 157-residue polypeptide: MGQLNVIEGHYDASGLRFAILASRFNDFVVDRLISGSIDCILRHGGTKENITIVRVAGAMELPLVCKKLSLTSKFDGIIILGAIIRGSTPHFDYVASEATKGVVNVSLQTDVPIGFGVLTTDTIEQAIERAGSKAGNKGSDATLAVLESIRVIQKIS.

Residues phenylalanine 25, 59 to 61 (AME), and 83 to 85 (AII) each bind 5-amino-6-(D-ribitylamino)uracil. 88–89 (ST) is a (2S)-2-hydroxy-3-oxobutyl phosphate binding site. Histidine 91 (proton donor) is an active-site residue. Phenylalanine 116 lines the 5-amino-6-(D-ribitylamino)uracil pocket. Arginine 130 provides a ligand contact to (2S)-2-hydroxy-3-oxobutyl phosphate.

Belongs to the DMRL synthase family.

The catalysed reaction is (2S)-2-hydroxy-3-oxobutyl phosphate + 5-amino-6-(D-ribitylamino)uracil = 6,7-dimethyl-8-(1-D-ribityl)lumazine + phosphate + 2 H2O + H(+). Its pathway is cofactor biosynthesis; riboflavin biosynthesis; riboflavin from 2-hydroxy-3-oxobutyl phosphate and 5-amino-6-(D-ribitylamino)uracil: step 1/2. Catalyzes the formation of 6,7-dimethyl-8-ribityllumazine by condensation of 5-amino-6-(D-ribitylamino)uracil with 3,4-dihydroxy-2-butanone 4-phosphate. This is the penultimate step in the biosynthesis of riboflavin. The sequence is that of 6,7-dimethyl-8-ribityllumazine synthase from Lawsonia intracellularis (strain PHE/MN1-00).